The sequence spans 174 residues: ATP-dependent protease subunit HslV (174 aa).

T2 is a catalytic residue. The Na(+) site is built by G157, C160, and T163.

It belongs to the peptidase T1B family. HslV subfamily. A double ring-shaped homohexamer of HslV is capped on each side by a ring-shaped HslU homohexamer. The assembly of the HslU/HslV complex is dependent on binding of ATP.

Its subcellular location is the cytoplasm. The enzyme catalyses ATP-dependent cleavage of peptide bonds with broad specificity.. With respect to regulation, allosterically activated by HslU binding. Its function is as follows. Protease subunit of a proteasome-like degradation complex believed to be a general protein degrading machinery. The protein is ATP-dependent protease subunit HslV of Shewanella sediminis (strain HAW-EB3).